A 47-amino-acid polypeptide reads, in one-letter code: AIKLVQSPNGNFAASFVLDGTKWIFKSKYYDSSKGYWVGIYEVWDRK.

The protein localises to the secreted. In terms of biological role, has antibacterial activity against X.oryzae pv oryzae and R.solanacearum, but not E.coli or P.carotovorum subsp carotovorum. May bind DNA or mRNA. The sequence is that of Antimicrobial peptide LCI from Bacillus subtilis.